Consider the following 106-residue polypeptide: ATP-dependent Clp protease adapter protein ClpS (106 aa).

The disordered stretch occupies residues 1–22; it reads MNEYHNSLKSKESVKDERQQKL. Residues 9-20 show a composition bias toward basic and acidic residues; sequence KSKESVKDERQQ.

Belongs to the ClpS family. In terms of assembly, binds to the N-terminal domain of the chaperone ClpA.

Involved in the modulation of the specificity of the ClpAP-mediated ATP-dependent protein degradation. This chain is ATP-dependent Clp protease adapter protein ClpS, found in Photorhabdus laumondii subsp. laumondii (strain DSM 15139 / CIP 105565 / TT01) (Photorhabdus luminescens subsp. laumondii).